A 317-amino-acid chain; its full sequence is MSDSAFVNGGREVSSLPLSAQMPGMASAADWVTLLKPRVMSLVVFTGLIGMLVAPGSLHPVLGAIAILCIAVATGASGAINMWYDRDIDAVMRRTKNRPIPAGRIEPGEALGYGIVLAVGSVLVMWLATNVVAAAVLAFAIFFYSVIYTMWLKRSTPQNIVIGGAAGAFPPVIGWAAVTGTIDLMPVMMFAIVFFWTPPHFWSLSLWAQMDYERAGVPMLPVVAGARKTRQHIMAYTVLLSVIAVLPWALGDTGRVYGLSAVVLSLGFLVQSWRVLRDKQDEVGLSLTKDAPARAAFKYSLIYLAVLFLALAVDRFV.

Helical transmembrane passes span 39-58 (VMSL…PGSL), 62-84 (LGAI…NMWY), 100-120 (IPAG…LAVG), 123-143 (LVMW…AIFF), 160-180 (IVIG…AVTG), 184-204 (LMPV…FWSL), 233-253 (IMAY…LGDT), 256-276 (VYGL…WRVL), and 293-313 (ARAA…ALAV).

It belongs to the UbiA prenyltransferase family. Protoheme IX farnesyltransferase subfamily.

It is found in the cell inner membrane. It carries out the reaction heme b + (2E,6E)-farnesyl diphosphate + H2O = Fe(II)-heme o + diphosphate. Its pathway is porphyrin-containing compound metabolism; heme O biosynthesis; heme O from protoheme: step 1/1. Functionally, converts heme B (protoheme IX) to heme O by substitution of the vinyl group on carbon 2 of heme B porphyrin ring with a hydroxyethyl farnesyl side group. This is Protoheme IX farnesyltransferase from Granulibacter bethesdensis (strain ATCC BAA-1260 / CGDNIH1).